A 334-amino-acid polypeptide reads, in one-letter code: D-fructose 1,6-bisphosphatase class 2/sedoheptulose 1,7-bisphosphatase (334 aa).

Mn(2+)-binding residues include aspartate 33, glutamate 57, aspartate 85, and glutamate 88. Residues 88 to 90 (EGT), tyrosine 119, 164 to 166 (RAR), and 186 to 188 (DGD) each bind substrate. Glutamate 213 is a binding site for Mn(2+).

The protein belongs to the FBPase class 2 family. Homotetramer. The cofactor is Mn(2+).

The enzyme catalyses beta-D-fructose 1,6-bisphosphate + H2O = beta-D-fructose 6-phosphate + phosphate. The catalysed reaction is D-sedoheptulose 1,7-bisphosphate + H2O = D-sedoheptulose 7-phosphate + phosphate. Its pathway is carbohydrate biosynthesis; Calvin cycle. Catalyzes the hydrolysis of fructose 1,6-bisphosphate (Fru 1,6-P2) and sedoheptulose 1,7-bisphosphate (Sed 1,7-P2) to fructose 6-phosphate and sedoheptulose 7-phosphate, respectively. This is D-fructose 1,6-bisphosphatase class 2/sedoheptulose 1,7-bisphosphatase from Synechococcus sp. (strain CC9311).